We begin with the raw amino-acid sequence, 895 residues long: Histone-lysine N-methyltransferase EZ3 (895 aa).

Residues 1–13 (MASSSKASDSSSQ) show a composition bias toward low complexity. 2 disordered regions span residues 1-30 (MASSSKASDSSSQRSKRSDQGTGREAAPAS) and 396-446 (SSVS…PGKR). Positions 396–422 (SSVSAEESTTPPSADTSETENASSDMP) are enriched in polar residues. Over residues 427–436 (RKYKISKRGP) the composition is skewed to basic residues. An SANT domain is found at 528-578 (TLSCWSALERDLYLKGIEIFGKNSCLIARNLLSGMKTCMEVANYMYNNGAA). Positions 628–732 (AGHPTVRKRI…SLGEPPARGD (105 aa)) constitute a CXC domain. An SET domain is found at 747–862 (QRILLGRSDV…ASEELFYDYR (116 aa)). The interval 870–895 (AWARRPEGSKKDEASVSHHRAHKVAR) is disordered. The span at 873-885 (RRPEGSKKDEASV) shows a compositional bias: basic and acidic residues. Positions 886–895 (SHHRAHKVAR) are enriched in basic residues.

Belongs to the class V-like SAM-binding methyltransferase superfamily. Histone-lysine methyltransferase family. EZ subfamily. In terms of tissue distribution, widely expressed.

The protein localises to the nucleus. It catalyses the reaction L-lysyl(27)-[histone H3] + 3 S-adenosyl-L-methionine = N(6),N(6),N(6)-trimethyl-L-lysyl(27)-[histone H3] + 3 S-adenosyl-L-homocysteine + 3 H(+). Its function is as follows. Polycomb group (PcG) protein. Catalytic subunit of some PcG multiprotein complex, which methylates 'Lys-27' of histone H3, leading to transcriptional repression of the affected target genes. PcG proteins are not required to initiate repression, but to maintain it during later stages of development. The protein is Histone-lysine N-methyltransferase EZ3 (EZ3) of Zea mays (Maize).